A 167-amino-acid polypeptide reads, in one-letter code: Ubiquitin-fold modifier-conjugating enzyme 1 (167 aa).

Cys116 acts as the Glycyl thioester intermediate in catalysis.

The protein belongs to the ubiquitin-conjugating enzyme family. UFC1 subfamily. In terms of assembly, interacts with UBA5 (via C-terminus). Interacts with UFL1. Interacts with UFM1.

Its function is as follows. E2-like enzyme which specifically catalyzes the second step in ufmylation. Accepts the ubiquitin-like modifier UFM1 from the E1 enzyme UBA5 and forms an intermediate with UFM1 via a thioester linkage. Ufmylation is involved in various processes, such as ribosome recycling, response to DNA damage, interferon response or reticulophagy (also called ER-phagy). In Salmo salar (Atlantic salmon), this protein is Ubiquitin-fold modifier-conjugating enzyme 1.